The chain runs to 288 residues: Bis(5'-nucleosyl)-tetraphosphatase, symmetrical (288 aa).

It belongs to the Ap4A hydrolase family.

It catalyses the reaction P(1),P(4)-bis(5'-adenosyl) tetraphosphate + H2O = 2 ADP + 2 H(+). Functionally, hydrolyzes diadenosine 5',5'''-P1,P4-tetraphosphate to yield ADP. This Baumannia cicadellinicola subsp. Homalodisca coagulata protein is Bis(5'-nucleosyl)-tetraphosphatase, symmetrical.